A 194-amino-acid polypeptide reads, in one-letter code: Peptidyl-tRNA hydrolase (194 aa).

Residue histidine 22 is the Proton acceptor of the active site. The tRNA site is built by tyrosine 67, asparagine 69, and asparagine 115.

Belongs to the PTH family. In terms of assembly, monomer.

The protein localises to the cytoplasm. It carries out the reaction an N-acyl-L-alpha-aminoacyl-tRNA + H2O = an N-acyl-L-amino acid + a tRNA + H(+). Functionally, hydrolyzes ribosome-free peptidyl-tRNAs (with 1 or more amino acids incorporated), which drop off the ribosome during protein synthesis, or as a result of ribosome stalling. Its function is as follows. Catalyzes the release of premature peptidyl moieties from peptidyl-tRNA molecules trapped in stalled 50S ribosomal subunits, and thus maintains levels of free tRNAs and 50S ribosomes. This is Peptidyl-tRNA hydrolase from Granulibacter bethesdensis (strain ATCC BAA-1260 / CGDNIH1).